The following is a 170-amino-acid chain: Odorant-binding protein 2a (170 aa).

The signal sequence occupies residues 1-15 (MKTLFLGVTLGLAAA). Cysteines 74 and 166 form a disulfide.

It belongs to the calycin superfamily. Lipocalin family. In terms of assembly, monomer. As to expression, strongly expressed in the nasal structures, salivary and lachrymal glands, and lung. Expressed in the liver.

It is found in the secreted. Binds and transports small hydrophobic volatile molecules with a higher affinity for aldehydes and large fatty acids, including undecanal, palmitic acid, efficient aldehydes, benzenic aldehydes, heterocyclic aldehydes and aliphatic acids. The polypeptide is Odorant-binding protein 2a (OBP2A) (Homo sapiens (Human)).